Consider the following 131-residue polypeptide: Profilin-2 (131 aa).

Cys13 and Cys115 are oxidised to a cystine. The Involved in PIP2 interaction signature appears at 81–97; it reads AVIRGKKGSGGITVKKT. Thr111 carries the phosphothreonine modification.

It belongs to the profilin family. Occurs in many kinds of cells as a complex with monomeric actin in a 1:1 ratio. Post-translationally, phosphorylated by MAP kinases. As to expression, pollen specific.

Its subcellular location is the cytoplasm. It localises to the cytoskeleton. Functionally, binds to actin and affects the structure of the cytoskeleton. At high concentrations, profilin prevents the polymerization of actin, whereas it enhances it at low concentrations. By binding to PIP2, it inhibits the formation of IP3 and DG. The chain is Profilin-2 (PRO2) from Zea mays (Maize).